A 152-amino-acid chain; its full sequence is Transcriptional repressor NrdR (152 aa).

Positions 1-21 are disordered; it reads MRCPFCGNGDTQVKDSRPTED. A zinc finger spans residues 3 to 34; sequence CPFCGNGDTQVKDSRPTEDSAAIRRRRFCPAC. A compositionally biased stretch (basic and acidic residues) spans 12-21; the sequence is QVKDSRPTED. The region spanning 49 to 139 is the ATP-cone domain; the sequence is LVIVKKDGQR…VYRNFREAKD (91 aa).

This sequence belongs to the NrdR family. It depends on Zn(2+) as a cofactor.

Functionally, negatively regulates transcription of bacterial ribonucleotide reductase nrd genes and operons by binding to NrdR-boxes. The protein is Transcriptional repressor NrdR of Rhodospirillum rubrum (strain ATCC 11170 / ATH 1.1.1 / DSM 467 / LMG 4362 / NCIMB 8255 / S1).